The chain runs to 1092 residues: Myelin regulatory factor (1092 aa).

The Cytoplasmic segment spans residues Met1–Thr730. Disordered stretches follow at residues Ser145–Leu168, Pro187–Gln210, and Gln258–Leu282. The span at Pro196 to Pro205 shows a compositional bias: pro residues. The segment at residues Ala246–Ser507 is a DNA-binding region (NDT80). Positions Ser553 to Ile662 constitute a Peptidase S74 domain. Positions Gly646–Arg677 form a coiled coil. Residues Met681–Arg695 are compositionally biased toward polar residues. Residues Met681–Pro714 are disordered. The chain crosses the membrane as a helical span at residues Ile731–Leu751. Topologically, residues Asn752 to Asp1092 are lumenal. 2 disordered regions span residues Thr798 to Trp817 and Ile849 to Tyr945. Composition is skewed to polar residues over residues Ile849–Ala867 and Thr928–Tyr945. N-linked (GlcNAc...) asparagine glycans are attached at residues Asn941, Asn961, Asn974, and Asn996.

This sequence belongs to the MRF family. As to quaternary structure, homotrimer. Follows autocatalytic cleavage via the peptidase S74 domain. Autoprocessing is apparently constitutive and is essential for transcriptional activity.

Its subcellular location is the endoplasmic reticulum membrane. It localises to the nucleus. It is found in the cytoplasm. In terms of biological role, constitutes a precursor of the transcription factor. Mediates the autocatalytic cleavage that releases the Myelin regulatory factor, N-terminal component that specifically activates transcription of central nervous system (CNS) myelin genes. Functionally, membrane-bound part that has no transcription factor activity and remains attached to the endoplasmic reticulum membrane following cleavage. Transcription factor that specifically activates expression of myelin genes during oligodendrocyte (OL) maturation, thereby playing a central role in oligodendrocyte maturation and CNS myelination. The polypeptide is Myelin regulatory factor (myrf) (Xenopus laevis (African clawed frog)).